Consider the following 299-residue polypeptide: Ankyrin repeat domain-containing protein 54 (299 aa).

Positions 1–32 are disordered; sequence MAAAAGGADDESRSGRSSSDGECAVAPEPLTG. At A2 the chain carries N-acetylalanine. 2 positions are modified to phosphoserine: S57 and S62. A Nuclear localization signal (NLS) motif is present at residues 98–116; sequence RRLGPTGKEVHALKRLRDS. ANK repeat units lie at residues 108 to 137, 141 to 170, 174 to 203, and 207 to 239; these read HALK…DPCA, KGRT…DPNQ, LGNT…RVDA, and AGRT…EVKQ. Positions 140–240 are LYN-binding; that stretch reads DKGRTALHFA…EAVRLEVKQI (101 aa). Positions 282-292 match the Nuclear export signal (NES) motif; the sequence is LLASFTSLSLQ.

Interacts (via ankyrin repeat region) with LYN (via SH3-domain) in an activation-independent status of LYN. Forms a multiprotein complex with LYN and HCLS1. Interacts with TSN2, VAV1, DBNL and LASP1.

It localises to the nucleus. The protein resides in the cytoplasm. It is found in the midbody. Functionally, plays an important role in regulating intracellular signaling events associated with erythroid terminal differentiation. The polypeptide is Ankyrin repeat domain-containing protein 54 (ANKRD54) (Bos taurus (Bovine)).